The sequence spans 261 residues: Glucosamine-6-phosphate deaminase (261 aa).

Residue aspartate 67 is the Proton acceptor; for enolization step of the active site. Catalysis depends on aspartate 136, which acts as the For ring-opening step. Histidine 138 serves as the catalytic Proton acceptor; for ring-opening step. The active-site For ring-opening step is glutamate 143.

This sequence belongs to the glucosamine/galactosamine-6-phosphate isomerase family. NagB subfamily.

It catalyses the reaction alpha-D-glucosamine 6-phosphate + H2O = beta-D-fructose 6-phosphate + NH4(+). The protein operates within amino-sugar metabolism; N-acetylneuraminate degradation; D-fructose 6-phosphate from N-acetylneuraminate: step 5/5. In terms of biological role, catalyzes the reversible isomerization-deamination of glucosamine 6-phosphate (GlcN6P) to form fructose 6-phosphate (Fru6P) and ammonium ion. The protein is Glucosamine-6-phosphate deaminase of Beutenbergia cavernae (strain ATCC BAA-8 / DSM 12333 / CCUG 43141 / JCM 11478 / NBRC 16432 / NCIMB 13614 / HKI 0122).